The following is a 257-amino-acid chain: Phosphonates import ATP-binding protein PhnC (257 aa).

The region spanning 2-246 is the ABC transporter domain; the sequence is IEFRNVSKVY…KFAEIYGDVA (245 aa). Residue 35 to 42 participates in ATP binding; it reads GLSGAGKS.

This sequence belongs to the ABC transporter superfamily. Phosphonates importer (TC 3.A.1.9.1) family. The complex is composed of two ATP-binding proteins (PhnC), two transmembrane proteins (PhnE) and a solute-binding protein (PhnD).

It is found in the cell membrane. The catalysed reaction is phosphonate(out) + ATP + H2O = phosphonate(in) + ADP + phosphate + H(+). In terms of biological role, part of the ABC transporter complex PhnCDE involved in phosphonates import. Responsible for energy coupling to the transport system. In Bacillus cereus (strain ATCC 10987 / NRS 248), this protein is Phosphonates import ATP-binding protein PhnC.